A 122-amino-acid chain; its full sequence is Large ribosomal subunit protein bL12 (122 aa).

The protein belongs to the bacterial ribosomal protein bL12 family. As to quaternary structure, homodimer. Part of the ribosomal stalk of the 50S ribosomal subunit. Forms a multimeric L10(L12)X complex, where L10 forms an elongated spine to which 2 to 4 L12 dimers bind in a sequential fashion. Binds GTP-bound translation factors.

Forms part of the ribosomal stalk which helps the ribosome interact with GTP-bound translation factors. Is thus essential for accurate translation. The protein is Large ribosomal subunit protein bL12 of Cellvibrio japonicus (strain Ueda107) (Pseudomonas fluorescens subsp. cellulosa).